A 440-amino-acid polypeptide reads, in one-letter code: MELRVGNKYRLGRKIGSGSFGDIYLGTTINTGEEVAIKLECIRTKHPQLHIESKFYKTMQGGIGIPRIIWCGSEGDYNVMVMELLGPSLEDLFNFCSRRFSLKTVLLLADQMISRIDYIHSRDFIHRDIKPDNFLMGLGKKGNLVYIIDFGLAKKFRDARSLKHIPYRENKNLTGTARYASINTHLGIEQSRRDDLESLGYVLMYFNLGALPWQGLKAANKRQKYERISEKKLSTSIVVLCKGFPSEFVNYLNFCRQMHFDQRPDYCHLRKLFRNLFHRLGFTYDYVFDWNLLKFGGPRNPQAIQQAQDGADGQAGHDAVAAAAAVAAAAAASSHQQQQHKVNAALGGGGGSAAQQQLQGGQTLAMLGGNGGGNGSQLIGGNGLNMDDSMAATNSSRPPYDTPERRPSIRMRQGGGGGGGGVGVGGMPSGGGGGGVGNAK.

Residues 9–277 (YRLGRKIGSG…HLRKLFRNLF (269 aa)) form the Protein kinase domain. ATP contacts are provided by residues 15-23 (IGSGSFGDI) and K38. Catalysis depends on D128, which acts as the Proton acceptor. A nuclear localization signal; essential for interaction with Bdbt and important for nuclear localization region spans residues 221-224 (KRQK). Residues S333 and S334 each carry the phosphoserine modification. Positions 376–440 (SQLIGGNGLN…GGGGGVGNAK (65 aa)) are disordered. The segment covering 413-440 (QGGGGGGGGVGVGGMPSGGGGGGVGNAK) has biased composition (gly residues).

Belongs to the protein kinase superfamily. CK1 Ser/Thr protein kinase family. Casein kinase I subfamily. In terms of assembly, forms a complex with per. Interacts with Dlish. Interacts (via nuclear localization signal) with Bdbt. In terms of tissue distribution, detected in the head (at protein level). Expressed in photoreceptor cells of the eyes as well as in the region situated between the optic lobe and the central brain.

Its subcellular location is the nucleus. It localises to the cytoplasm. The protein resides in the cytosol. It carries out the reaction L-seryl-[protein] + ATP = O-phospho-L-seryl-[protein] + ADP + H(+). The catalysed reaction is L-threonyl-[protein] + ATP = O-phospho-L-threonyl-[protein] + ADP + H(+). Serine/threonine-protein kinase which is involved in the circadian rhythm pathway, viability and planar cell polarity. In the circadian rhythm pathway, phosphorylates the clock gene period (per) and targets it for degradation in the absence of timeless (tim), thus contributing to production of the circadian oscillations of the clock genes. Together with CkIalpha, regulates processing of ci by phosphorylating it, which promotes its binding to slmb, the F-box recognition component of the SCF(slmb) E3 ubiquitin-protein ligase. Involved in the inhibition of apoptosis during cell proliferation and growth arrest in imaginal disks. Also functions in planar cell polarity. The sequence is that of Discs overgrown protein kinase (dco) from Drosophila melanogaster (Fruit fly).